The following is a 64-amino-acid chain: DNA gyrase inhibitor YacG (64 aa).

Positions 9, 12, 28, and 32 each coordinate Zn(2+). The segment at 42 to 64 is disordered; that stretch reads DEENAIPGAPDMSDSDGWSEEQY. The span at 54–64 shows a compositional bias: acidic residues; it reads SDSDGWSEEQY.

It belongs to the DNA gyrase inhibitor YacG family. In terms of assembly, interacts with GyrB. Zn(2+) is required as a cofactor.

Functionally, inhibits all the catalytic activities of DNA gyrase by preventing its interaction with DNA. Acts by binding directly to the C-terminal domain of GyrB, which probably disrupts DNA binding by the gyrase. The chain is DNA gyrase inhibitor YacG from Vibrio vulnificus (strain YJ016).